Reading from the N-terminus, the 114-residue chain is MTWLMLLSACLLTCLGQIAQKYAVEGWRETFPGVLAALRSMWLWLAIACLGLGLLVWLLVLQRMDVGIAYPMLGLNFVLITLVGRYVFKEPVDPQHWLGIALILVGVFQLGRQA.

The next 3 membrane-spanning stretches (helical) occupy residues 41–61 (MWLW…LLVL), 64–84 (MDVG…TLVG), and 91–111 (PVDP…FQLG).

It belongs to the ArnE family. Heterodimer of ArnE and ArnF.

Its subcellular location is the cell inner membrane. The protein operates within bacterial outer membrane biogenesis; lipopolysaccharide biosynthesis. Its function is as follows. Translocates 4-amino-4-deoxy-L-arabinose-phosphoundecaprenol (alpha-L-Ara4N-phosphoundecaprenol) from the cytoplasmic to the periplasmic side of the inner membrane. The chain is Probable 4-amino-4-deoxy-L-arabinose-phosphoundecaprenol flippase subunit ArnE from Pseudomonas savastanoi pv. phaseolicola (strain 1448A / Race 6) (Pseudomonas syringae pv. phaseolicola (strain 1448A / Race 6)).